A 900-amino-acid chain; its full sequence is Bifunctional uridylyltransferase/uridylyl-removing enzyme (900 aa).

Residues Met-1–Pro-342 are uridylyltransferase. A uridylyl-removing region spans residues Leu-343–Thr-705. In terms of domain architecture, HD spans Val-461–Leu-583. ACT domains lie at Gln-706 to Arg-789 and Ile-816 to Ser-896.

This sequence belongs to the GlnD family. Mg(2+) is required as a cofactor.

The catalysed reaction is [protein-PII]-L-tyrosine + UTP = [protein-PII]-uridylyl-L-tyrosine + diphosphate. It carries out the reaction [protein-PII]-uridylyl-L-tyrosine + H2O = [protein-PII]-L-tyrosine + UMP + H(+). With respect to regulation, uridylyltransferase (UTase) activity is inhibited by glutamine, while glutamine activates uridylyl-removing (UR) activity. Modifies, by uridylylation and deuridylylation, the PII regulatory proteins (GlnB and homologs), in response to the nitrogen status of the cell that GlnD senses through the glutamine level. Under low glutamine levels, catalyzes the conversion of the PII proteins and UTP to PII-UMP and PPi, while under higher glutamine levels, GlnD hydrolyzes PII-UMP to PII and UMP (deuridylylation). Thus, controls uridylylation state and activity of the PII proteins, and plays an important role in the regulation of nitrogen fixation and metabolism. The sequence is that of Bifunctional uridylyltransferase/uridylyl-removing enzyme from Stutzerimonas stutzeri (strain A1501) (Pseudomonas stutzeri).